Reading from the N-terminus, the 269-residue chain is Tryptophan synthase alpha chain (269 aa).

Residues Glu49 and Asp60 each act as proton acceptor in the active site.

The protein belongs to the TrpA family. As to quaternary structure, tetramer of two alpha and two beta chains.

It carries out the reaction (1S,2R)-1-C-(indol-3-yl)glycerol 3-phosphate + L-serine = D-glyceraldehyde 3-phosphate + L-tryptophan + H2O. The protein operates within amino-acid biosynthesis; L-tryptophan biosynthesis; L-tryptophan from chorismate: step 5/5. The alpha subunit is responsible for the aldol cleavage of indoleglycerol phosphate to indole and glyceraldehyde 3-phosphate. The protein is Tryptophan synthase alpha chain of Stutzerimonas stutzeri (strain A1501) (Pseudomonas stutzeri).